The chain runs to 63 residues: U7-theraphotoxin-Cg1a (63 aa).

An N-terminal signal peptide occupies residues 1–21 (MKTSILFVIFGLALLFALSVA). The propeptide occupies 22 to 31 (IEMEEEETDR). 3 disulfide bridges follow: Cys33–Cys47, Cys40–Cys52, and Cys46–Cys59.

Expressed by the venom gland.

The protein resides in the secreted. Its function is as follows. Inhibits preferentially tetrodotoxin-insensitive sodium currents (Nav) on rat cardiac myocytes (IC(50) is 0.26 uM) and has weaker inhibition activity toward tetrodotoxin-sensitive sodium currents on rat dorsal root ganglion (DRG) sensory neurons (IC(50) is 0.83 uM) and on cockroach dorsal unpaired median (DUM) neurons (IC(50) is 1.19 uM). Has no significant effect on potassium currents on DRG neurons. This is U7-theraphotoxin-Cg1a from Chilobrachys guangxiensis (Chinese earth tiger tarantula).